The chain runs to 408 residues: Aminoacylase-1B (408 aa).

H80 lines the Zn(2+) pocket. D82 is a catalytic residue. A Zn(2+)-binding site is contributed by D113. The Proton acceptor role is filled by E147. Positions 148, 175, and 373 each coordinate Zn(2+). A Phosphoserine modification is found at S408.

Belongs to the peptidase M20A family. Homodimer. Requires Zn(2+) as cofactor. Expressed in kidney.

Its subcellular location is the cytoplasm. The enzyme catalyses an N-acyl-L-amino acid + H2O = an L-alpha-amino acid + a carboxylate. It carries out the reaction an N-acetyl-L-cysteine-S-conjugate + H2O = an S-substituted L-cysteine + acetate. In terms of biological role, involved in the hydrolysis of N-acylated or N-acetylated amino acids (except L-aspartate). The protein is Aminoacylase-1B (Acy1b) of Rattus norvegicus (Rat).